Here is an 856-residue protein sequence, read N- to C-terminus: Envelope glycoprotein gp160 (856 aa).

The first 22 residues, 1–22 (MKGSKNQLLIAIVLASAYLIHC), serve as a signal peptide directing secretion. At 23 to 670 (KQFVTVFYGI…FTSWVRYIQY (648 aa)) the chain is on the extracellular side. An N-linked (GlcNAc...) asparagine; by host glycan is attached at Asn37. Residues Cys44 and Cys57 are joined by a disulfide bond. N-linked (GlcNAc...) asparagine; by host glycosylation is found at Asn70, Asn79, Asn112, Asn116, Asn128, Asn133, Asn142, Asn182, Asn183, Asn196, Asn228, Asn231, Asn238, Asn262, Asn268, Asn279, Asn290, Asn300, Asn355, Asn390, Asn400, Asn440, and Asn457. Intrachain disulfides connect Cys101-Cys204, Cys108-Cys195, Cys113-Cys154, Cys217-Cys247, and Cys227-Cys239. Positions 113–153 (CTRNMTTWTGRTDTQNITIINDTSHARADNCTGLKEEEMID) are V1. The V2 stretch occupies residues 154–195 (CQFSMTGLERDKRKQYTEAWYSKDVVCDNNTSSQSKCYMNHC). A V3 region spans residues 295–328 (CKRPGNKTVLPITFMSGFKFHSQPVINKKPRQAW). An intrachain disulfide couples Cys295 to Cys329. 2 disulfides stabilise this stretch: Cys382/Cys439 and Cys389/Cys412. The interval 389–412 (CNMTWFLNWVENRTGQKQRNYAPC) is V4. Residues 455–460 (QTNITF) are V5. Positions 503 to 523 (GVFVLGFLGFLATAGSAMGAA) are fusion peptide. The tract at residues 566-582 (LQARVTAIEKYLKDQAQ) is immunosuppression. Asn602, Asn611, and Asn627 each carry an N-linked (GlcNAc...) asparagine; by host glycan. Positions 615 to 636 (QEWEQKVRYLEANISQSLEQAQ) form a coiled coil. The segment at 648 to 669 (KLNSWDVFTNWLDFTSWVRYIQ) is MPER; binding to GalCer. The chain crosses the membrane as a helical span at residues 671 to 691 (GVYVVVGIVALRIVIYIVQML). At 692–856 (SRLRKGYRPV…IRQGAELALL (165 aa)) the chain is on the cytoplasmic side. Residues 698–701 (YRPV) carry the YXXV motif; contains endocytosis signal motif. Cys764 carries S-palmitoyl cysteine; by host lipidation. Positions 855-856 (LL) match the Di-leucine internalization motif motif.

In terms of assembly, the mature envelope protein (Env) consists of a homotrimer of non-covalently associated gp120-gp41 heterodimers. The resulting complex protrudes from the virus surface as a spike. There seems to be as few as 10 spikes on the average virion. Interacts with human CD4, CCR5 and CXCR4, to form a P4HB/PDI-CD4-CXCR4-gp120 complex. Gp120 also interacts with the C-type lectins CD209/DC-SIGN and CLEC4M/DC-SIGNR (collectively referred to as DC-SIGN(R)). Gp120 and gp41 interact with GalCer. As to quaternary structure, the mature envelope protein (Env) consists of a homotrimer of non-covalently associated gp120-gp41 heterodimers. The resulting complex protrudes from the virus surface as a spike. There seems to be as few as 10 spikes on the average virion. Post-translationally, specific enzymatic cleavages in vivo yield mature proteins. Envelope glycoproteins are synthesized as an inactive precursor that is heavily N-glycosylated and processed likely by host cell furin in the Golgi to yield the mature SU and TM proteins. The cleavage site between SU and TM requires the minimal sequence [KR]-X-[KR]-R. Palmitoylation of the transmembrane protein and of Env polyprotein (prior to its proteolytic cleavage) is essential for their association with host cell membrane lipid rafts. Palmitoylation is therefore required for envelope trafficking to classical lipid rafts, but not for viral replication.

The protein localises to the virion membrane. Its subcellular location is the host cell membrane. It localises to the host endosome membrane. Functionally, the surface protein gp120 (SU) attaches the virus to the host lymphoid cell by binding to the primary receptor CD4. This interaction induces a structural rearrangement creating a high affinity binding site for a chemokine coreceptor like CXCR4 and/or CCR5. This peculiar 2 stage receptor-interaction strategy allows gp120 to maintain the highly conserved coreceptor-binding site in a cryptic conformation, protected from neutralizing antibodies. Since CD4 also displays a binding site for the disulfide-isomerase P4HB/PDI, a P4HB/PDI-CD4-CXCR4-gp120 complex may form. In that complex, P4HB/PDI could reach and reduce gp120 disulfide bonds, causing major conformational changes in gp120. TXN, another PDI family member could also be involved in disulfide rearrangements in Env during fusion. These changes are transmitted to the transmembrane protein gp41 and are thought to activate its fusogenic potential by unmasking its fusion peptide. Its function is as follows. The surface protein gp120 is a ligand for CD209/DC-SIGN and CLEC4M/DC-SIGNR, which are respectively found on dendritic cells (DCs), and on endothelial cells of liver sinusoids and lymph node sinuses. These interactions allow capture of viral particles at mucosal surfaces by these cells and subsequent transmission to permissive cells. DCs are professional antigen presenting cells, critical for host immunity by inducing specific immune responses against a broad variety of pathogens. They act as sentinels in various tissues where they take up antigen, process it, and present it to T-cells following migration to lymphoid organs. HIV subverts the migration properties of dendritic cells to gain access to CD4+ T-cells in lymph nodes. Virus transmission to permissive T-cells occurs either in trans (without DCs infection, through viral capture and transmission), or in cis (following DCs productive infection, through the usual CD4-gp120 interaction), thereby inducing a robust infection. In trans infection, bound virions remain infectious over days and it is proposed that they are not degraded, but protected in non-lysosomal acidic organelles within the DCs close to the cell membrane thus contributing to the viral infectious potential during DCs' migration from the periphery to the lymphoid tissues. On arrival at lymphoid tissues, intact virions recycle back to DCs' cell surface allowing virus transmission to CD4+ T-cells. Virion capture also seems to lead to MHC-II-restricted viral antigen presentation, and probably to the activation of HIV-specific CD4+ cells. In terms of biological role, the transmembrane protein gp41 (TM) acts as a class I viral fusion protein. Under the current model, the protein has at least 3 conformational states: pre-fusion native state, pre-hairpin intermediate state, and post-fusion hairpin state. During fusion of viral and target intracellular membranes, the coiled coil regions (heptad repeats) assume a trimer-of-hairpins structure, positioning the fusion peptide in close proximity to the C-terminal region of the ectodomain. The formation of this structure appears to drive apposition and subsequent fusion of viral and target cell membranes. Complete fusion occurs in host cell endosomes and is dynamin-dependent, however some lipid transfer might occur at the plasma membrane. The virus undergoes clathrin-dependent internalization long before endosomal fusion, thus minimizing the surface exposure of conserved viral epitopes during fusion and reducing the efficacy of inhibitors targeting these epitopes. Membranes fusion leads to delivery of the nucleocapsid into the cytoplasm. The envelope glycoprotein gp160 precursor down-modulates cell surface CD4 antigen by interacting with it in the endoplasmic reticulum and blocking its transport to the cell surface. Functionally, the gp120-gp41 heterodimer seems to contribute to T-cell depletion during HIV-1 infection. The envelope glycoproteins expressed on the surface of infected cells induce apoptosis through an interaction with uninfected cells expressing the receptor (CD4) and the coreceptors CXCR4 or CCR5. This type of bystander killing may be obtained by at least three distinct mechanisms. First, the interaction between the 2 cells can induce cellular fusion followed by nuclear fusion within the syncytium. Syncytia are condemned to die from apoptosis. Second, the 2 interacting cells may not fuse entirely and simply exchange plasma membrane lipids, after a sort of hemifusion process, followed by rapid death. Third, it is possible that virus-infected cells, on the point of undergoing apoptosis, fuse with CD4-expressing cells, in which case apoptosis is rapidly transmitted from one cell to the other and thus occurs in a sort of contagious fashion. Its function is as follows. The gp120-gp41 heterodimer allows rapid transcytosis of the virus through CD4 negative cells such as simple epithelial monolayers of the intestinal, rectal and endocervical epithelial barriers. Both gp120 and gp41 specifically recognize glycosphingolipids galactosyl-ceramide (GalCer) or 3' sulfo-galactosyl-ceramide (GalS) present in the lipid rafts structures of epithelial cells. Binding to these alternative receptors allows the rapid transcytosis of the virus through the epithelial cells. This transcytotic vesicle-mediated transport of virions from the apical side to the basolateral side of the epithelial cells does not involve infection of the cells themselves. The sequence is that of Envelope glycoprotein gp160 (env) from Human immunodeficiency virus type 2 subtype A (isolate NIH-Z) (HIV-2).